The primary structure comprises 423 residues: UPF0229 protein VV2350 (423 aa).

Residues 81–111 (QFITGDKIERPKGGQGGGGAGDGDASADGEG) form a disordered region. Residues 93 to 102 (GGQGGGGAGD) show a composition bias toward gly residues.

The protein belongs to the UPF0229 family.

In Vibrio vulnificus (strain YJ016), this protein is UPF0229 protein VV2350.